The primary structure comprises 225 residues: mRNA-decapping protein D10 (225 aa).

Positions 35-218 (AKYPLSVIGI…NVIKYIINAV (184 aa)) constitute a Nudix hydrolase domain. A Nudix box motif is present at residues 116–137 (GKIKDLESITNCLVREIKEELN). Glu122 serves as a coordination point for Mg(2+). The active-site Nucleophile is Glu131. Mn(2+) is bound at residue Glu135. Asp157 contributes to the Mg(2+) binding site.

Belongs to the Nudix hydrolase family. The cofactor is Mg(2+). It depends on Mn(2+) as a cofactor.

Its function is as follows. Decapping enzyme required for the removal of the 5'-end m7GpppN cap tethered to viral and host mRNAs to allow their decay in cells. May therefore accelerate viral and cellular mRNA turnover to eliminate competing host mRNAs and allow stage-specific synthesis of viral proteins. Acceleration of the turnover of cellular transcripts may even promote the shutoff of host protein synthesis. In Fowlpox virus (strain NVSL) (FPV), this protein is mRNA-decapping protein D10.